Consider the following 218-residue polypeptide: MSVVVKICGLSTRDTLEAAVAAGADMVGFVFFPASPRHVGFDLARALGDQVGSRAAKVALTVDASDALLRDVVDALAPDLLQLHGKESPERVRAIRQTFGLPVMKAVAVATADDLAALPAYAAAADRILFDARPPKDALRPGGLGVPFDWALLSGLALPVPYMVSGGITPGNVAEALRVTRAGGIDVSSGVETAPGVKDSELIRSFIRATRASEETMT.

It belongs to the TrpF family.

It carries out the reaction N-(5-phospho-beta-D-ribosyl)anthranilate = 1-(2-carboxyphenylamino)-1-deoxy-D-ribulose 5-phosphate. It participates in amino-acid biosynthesis; L-tryptophan biosynthesis; L-tryptophan from chorismate: step 3/5. This chain is N-(5'-phosphoribosyl)anthranilate isomerase, found in Rhodopseudomonas palustris (strain HaA2).